Here is a 66-residue protein sequence, read N- to C-terminus: Large ribosomal subunit protein bL35 (66 aa).

Residues 1-26 (MPKMKTHRGAAKRVKRTGSGKLKRSR) are compositionally biased toward basic residues. The disordered stretch occupies residues 1–49 (MPKMKTHRGAAKRVKRTGSGKLKRSRAFTSHLFANKSTKQKRKLRKASL).

It belongs to the bacterial ribosomal protein bL35 family.

This chain is Large ribosomal subunit protein bL35, found in Staphylococcus saprophyticus subsp. saprophyticus (strain ATCC 15305 / DSM 20229 / NCIMB 8711 / NCTC 7292 / S-41).